The primary structure comprises 292 residues: MSLIDWFAARRKDQFVGKVSQDTEESDGLWVKCSECGQVAYRKDLISNFNVCSNCSHHNRINSDERINIIADKDSFKEFDDSLSPTDPLKFKDRRSYSDRIKESQEGTGLKDGVITGICSINSMPLALAVMDFRFMGGSMGSVVGEKITRIIEKATIENYPIVIVCASGGARMQEGMLSLMQMAKISGALKKHRAKNLLYMPLLTHPTTGGVTASFAMLGDLILAEPKALIGFAGRRVIEQTLREKLPDNFQTAEYLLEHGFVDVIVNRKELKSTLTSILKIHGVKDLMGAN.

The CoA carboxyltransferase N-terminal domain occupies 29 to 292 (LWVKCSECGQ…HGVKDLMGAN (264 aa)). The Zn(2+) site is built by C33, C36, C52, and C55. Residues 33–55 (CSECGQVAYRKDLISNFNVCSNC) form a C4-type zinc finger.

It belongs to the AccD/PCCB family. As to quaternary structure, acetyl-CoA carboxylase is a heterohexamer composed of biotin carboxyl carrier protein (AccB), biotin carboxylase (AccC) and two subunits each of ACCase subunit alpha (AccA) and ACCase subunit beta (AccD). Zn(2+) serves as cofactor.

It localises to the cytoplasm. It carries out the reaction N(6)-carboxybiotinyl-L-lysyl-[protein] + acetyl-CoA = N(6)-biotinyl-L-lysyl-[protein] + malonyl-CoA. It participates in lipid metabolism; malonyl-CoA biosynthesis; malonyl-CoA from acetyl-CoA: step 1/1. In terms of biological role, component of the acetyl coenzyme A carboxylase (ACC) complex. Biotin carboxylase (BC) catalyzes the carboxylation of biotin on its carrier protein (BCCP) and then the CO(2) group is transferred by the transcarboxylase to acetyl-CoA to form malonyl-CoA. In Prochlorococcus marinus (strain MIT 9515), this protein is Acetyl-coenzyme A carboxylase carboxyl transferase subunit beta.